The following is a 442-amino-acid chain: UDP-N-acetylglucosamine--peptide N-acetylglucosaminyltransferase stabilizing protein GtfB (442 aa).

The protein belongs to the GtfB family. As to quaternary structure, interacts with glycosyltransferase GtfA (Gtf1). Interacts with glycosyltransferase GtfA; probably forms a heterotetramer with 2 subunits each of GtfA and GtfB. Part of the accessory SecA2/SecY2 protein translocation apparatus.

It is found in the cell membrane. It participates in protein modification; protein glycosylation. Its function is as follows. Required for the polymorphic O-glycosylation of the serine-rich repeat protein Srr2. A stabilizing protein that is part of the accessory SecA2/SecY2 system specifically required to export serine-rich repeat proteins, probably Srr2 in this organism. The GtfA-GtfB (Gtf1-Gtf2 in this bacteria) complex adds GlcNAc from UDP-GlcNAc to Srr2 substrate, attaching the first sugar residue. Stabilizes the glycosylation activity of GtfA in vivo. Upon expression in a gtfB deletion mutant of S.parasanguis, GtfB confers incorrect glycosylation and partial complementation of a biofilm formation defect, while GtfA/GtfB restores correct expression of serine-rich repeat protein Fap1 and completely restores a biofilm formation defect in a S.parasanguis double gtfA-gtfB deletion. The polypeptide is UDP-N-acetylglucosamine--peptide N-acetylglucosaminyltransferase stabilizing protein GtfB (Streptococcus agalactiae).